Consider the following 354-residue polypeptide: Dual-specificity RNA methyltransferase RlmN (354 aa).

E89 functions as the Proton acceptor in the catalytic mechanism. In terms of domain architecture, Radical SAM core spans 106 to 339; the sequence is KEAKYTVCVS…CTIRKSKGMD (234 aa). The cysteines at positions 113 and 344 are disulfide-linked. [4Fe-4S] cluster-binding residues include C120, C124, and C127. Residues 170 to 171, S202, 225 to 227, and N301 each bind S-adenosyl-L-methionine; these read GE and SLH. C344 acts as the S-methylcysteine intermediate in catalysis.

The protein belongs to the radical SAM superfamily. RlmN family. [4Fe-4S] cluster is required as a cofactor.

It is found in the cytoplasm. It carries out the reaction adenosine(2503) in 23S rRNA + 2 reduced [2Fe-2S]-[ferredoxin] + 2 S-adenosyl-L-methionine = 2-methyladenosine(2503) in 23S rRNA + 5'-deoxyadenosine + L-methionine + 2 oxidized [2Fe-2S]-[ferredoxin] + S-adenosyl-L-homocysteine. The catalysed reaction is adenosine(37) in tRNA + 2 reduced [2Fe-2S]-[ferredoxin] + 2 S-adenosyl-L-methionine = 2-methyladenosine(37) in tRNA + 5'-deoxyadenosine + L-methionine + 2 oxidized [2Fe-2S]-[ferredoxin] + S-adenosyl-L-homocysteine. Its function is as follows. Specifically methylates position 2 of adenine 2503 in 23S rRNA and position 2 of adenine 37 in tRNAs. m2A2503 modification seems to play a crucial role in the proofreading step occurring at the peptidyl transferase center and thus would serve to optimize ribosomal fidelity. The polypeptide is Dual-specificity RNA methyltransferase RlmN (Nautilia profundicola (strain ATCC BAA-1463 / DSM 18972 / AmH)).